The following is a 204-amino-acid chain: Lipid A acyltransferase PagP (204 aa).

A signal peptide spans 1–25; the sequence is MSYKHLISACIFSSLCLGQVNAVLA. Active-site residues include H76, D119, and S120.

This sequence belongs to the lipid A palmitoyltransferase family. As to quaternary structure, homodimer.

It localises to the cell outer membrane. It catalyses the reaction a lipid A + a 1,2-diacyl-sn-glycero-3-phosphocholine = a hepta-acyl lipid A + a 2-acyl-sn-glycero-3-phosphocholine. The enzyme catalyses a lipid IVA + a 1,2-diacyl-sn-glycero-3-phosphocholine = a lipid IVB + a 2-acyl-sn-glycero-3-phosphocholine. The catalysed reaction is a lipid IIA + a 1,2-diacyl-sn-glycero-3-phosphocholine = a lipid IIB + a 2-acyl-sn-glycero-3-phosphocholine. In terms of biological role, transfers a fatty acid residue from the sn-1 position of a phospholipid to the N-linked hydroxyfatty acid chain on the proximal unit of lipid A or its precursors. In Yersinia enterocolitica serotype O:8 / biotype 1B (strain NCTC 13174 / 8081), this protein is Lipid A acyltransferase PagP.